We begin with the raw amino-acid sequence, 322 residues long: Atrochrysone carboxyl ACP thioesterase nsrC (322 aa).

Residues His-105, His-107, Asp-109, and His-110 each coordinate Zn(2+). Asp-109 functions as the Proton donor/acceptor in the catalytic mechanism.

This sequence belongs to the metallo-beta-lactamase superfamily. Zn(2+) is required as a cofactor.

It catalyses the reaction atrochrysone carboxyl-[ACP] + H2O = atrochrysone carboxylate + holo-[ACP] + H(+). Its pathway is secondary metabolite biosynthesis. Functionally, atrochrysone carboxyl ACP thioesterase; part of the gene cluster that mediates the biosynthesis of the tetrahydroxanthone dimer neosartorin, which exhibits antibacterial activity. The two different monomeric units appear to be synthesized by the same set of enzymes, among which the Baeyer-Villiger monooxygenase nsrF is the key enzyme for the divergence of the biosynthetic routes. The pathway begins with the synthesis of atrochrysone thioester by the polyketide synthase nsrB. The atrochrysone carboxyl ACP thioesterase nsrC then breaks the thioester bond and releases the atrochrysone carboxylic acid from AacuL. Atrochrysone carboxylic acid is decarboxylated by the decarboxylase nsrE, and oxidized by the anthrone oxygenase nsrD to yield emodin. Emodin is then reduced to emodin hydroquinone by the oxidoreductase nsrR. A-ring reduction by the short chain dehydrogenase nsrJ, dehydration by the scytalone dehydratase-like protein nsrI and probable spontaneous re-oxidation, results in overall deoxygenation to chrysophanol. The Baeyer-Villiger monooxygenase nsrF accepts chrysophanol as a substrate to insert one oxygen atom at two different positions to yield the precursors of both monomric units. NsrF is promiscuous/flexible in interacting with the 2 (non methylated and methylated) aromatic rings of chrysophanol, thus diverging the biosynthetic pathway at this point. After the hydrolysis of the lactones, methylesterification by the methyltransferase nsrG yields respectively moniliphenone and 2,2',6'-trihydroxy-4-methyl-6-methoxya-cyldiphenylmethanone. The next steps are the hydroxylation by the FAD-dependent monooxygenase nsrK, followed by isomerization by the monooxygenase nsrQ. The short chain dehydrogenase/reductase nsrO then catalyzes the C-5 ketoreduction to give the xanthone skeleton of blennolide C and 5-acetylblennolide A. The acetyltransferase nsrL has a strict substrate specificity and uses only blennolide A but not blennolide C to yield 5-acetylblennolide A as the single-acetylated product. In the final step of the biosynthesis, the heterodimerization of the 2 xanthones, blennolide C and 5-acetylblennolide A, is catalyzed by the cytochrome P450 monooxygenase nsrP. NsrP can utilize at least three different xanthones as its substrates to perform the dimerization reaction. The polypeptide is Atrochrysone carboxyl ACP thioesterase nsrC (Aspergillus novofumigatus (strain IBT 16806)).